The chain runs to 363 residues: Melanoma-associated antigen B16 (363 aa).

The interval 33–124 (EPCSSPHLMA…PDQSDSTDLP (92 aa)) is disordered. Residues 82–97 (ASTSSDLQHPYDSSSE) are compositionally biased toward low complexity. The 200-residue stretch at 128-327 (VDGKVDFLVN…TVFLSQYEEA (200 aa)) folds into the MAGE domain. The tract at residues 342–363 (HADSSSTSGESSSDTSSNFSQV) is disordered.

The protein is Melanoma-associated antigen B16 (Mageb16) of Mus musculus (Mouse).